A 217-amino-acid polypeptide reads, in one-letter code: Large ribosomal subunit protein uL3 (217 aa).

The protein belongs to the universal ribosomal protein uL3 family. As to quaternary structure, part of the 50S ribosomal subunit. Forms a cluster with proteins L14 and L19.

Its function is as follows. One of the primary rRNA binding proteins, it binds directly near the 3'-end of the 23S rRNA, where it nucleates assembly of the 50S subunit. This Mycobacterium sp. (strain KMS) protein is Large ribosomal subunit protein uL3.